The following is a 264-amino-acid chain: Thymidylate synthase (264 aa).

Arg21 contacts dUMP. His51 contributes to the (6R)-5,10-methylene-5,6,7,8-tetrahydrofolate binding site. Residue 126-127 (RR) participates in dUMP binding. The Nucleophile role is filled by Cys146. Residues 166–169 (RSAD), Asn177, and 207–209 (HLY) contribute to the dUMP site. Asp169 is a binding site for (6R)-5,10-methylene-5,6,7,8-tetrahydrofolate. Ala263 is a binding site for (6R)-5,10-methylene-5,6,7,8-tetrahydrofolate.

Belongs to the thymidylate synthase family. Bacterial-type ThyA subfamily. In terms of assembly, homodimer.

It is found in the cytoplasm. The enzyme catalyses dUMP + (6R)-5,10-methylene-5,6,7,8-tetrahydrofolate = 7,8-dihydrofolate + dTMP. The protein operates within pyrimidine metabolism; dTTP biosynthesis. Catalyzes the reductive methylation of 2'-deoxyuridine-5'-monophosphate (dUMP) to 2'-deoxythymidine-5'-monophosphate (dTMP) while utilizing 5,10-methylenetetrahydrofolate (mTHF) as the methyl donor and reductant in the reaction, yielding dihydrofolate (DHF) as a by-product. This enzymatic reaction provides an intracellular de novo source of dTMP, an essential precursor for DNA biosynthesis. The protein is Thymidylate synthase of Nitrosomonas europaea (strain ATCC 19718 / CIP 103999 / KCTC 2705 / NBRC 14298).